Consider the following 319-residue polypeptide: BTB/POZ domain-containing adapter for CUL3-mediated RhoA degradation protein 2 (319 aa).

Residues 31 to 99 (KYIRLNVGGC…LRDDTITLPK (69 aa)) form the BTB domain.

Belongs to the BACURD family. Component of the BCR(TNFAIP1) E3 ubiquitin ligase complex, at least composed of cul3, tnfaip1/bacurd2 and rbx1.

It is found in the cytoplasm. The protein resides in the nucleus. The protein localises to the endosome. It functions in the pathway protein modification; protein ubiquitination. Functionally, substrate-specific adapter of a BCR (BTB-CUL3-RBX1) E3 ubiquitin-protein ligase complex involved in regulation of cytoskeleton structure. The BCR(TNFAIP1) E3 ubiquitin ligase complex mediates the ubiquitination of target proteins, leading to their degradation by the proteasome. The chain is BTB/POZ domain-containing adapter for CUL3-mediated RhoA degradation protein 2 (tnfaip1) from Xenopus tropicalis (Western clawed frog).